Reading from the N-terminus, the 204-residue chain is Small ribosomal subunit protein uS4 (204 aa).

Residues 95-157 (RRLDNTVFRM…KGIHSIIRHN (63 aa)) form the S4 RNA-binding domain.

It belongs to the universal ribosomal protein uS4 family. Part of the 30S ribosomal subunit. Contacts protein S5. The interaction surface between S4 and S5 is involved in control of translational fidelity.

In terms of biological role, one of the primary rRNA binding proteins, it binds directly to 16S rRNA where it nucleates assembly of the body of the 30S subunit. Functionally, with S5 and S12 plays an important role in translational accuracy. The chain is Small ribosomal subunit protein uS4 from Treponema pallidum (strain Nichols).